The chain runs to 440 residues: Chromosomal replication initiator protein DnaA (440 aa).

Positions 1 to 93 (MNVQLNEIWN…QTPVKPVAQE (93 aa)) are domain I, interacts with DnaA modulators. Residues 94 to 101 (YTEDSNMS) form a domain II region. Residues 102–318 (FLNPKYTFDT…GALNRVIAYS (217 aa)) are domain III, AAA+ region. ATP is bound by residues Gly-146, Gly-148, Lys-149, and Thr-150. The domain IV, binds dsDNA stretch occupies residues 319–440 (TLTENIINVD…EEIKKNITGG (122 aa)).

It belongs to the DnaA family. As to quaternary structure, oligomerizes as a right-handed, spiral filament on DNA at oriC.

The protein resides in the cytoplasm. Plays an essential role in the initiation and regulation of chromosomal replication. ATP-DnaA binds to the origin of replication (oriC) to initiate formation of the DNA replication initiation complex once per cell cycle. Binds the DnaA box (a 9 base pair repeat at the origin) and separates the double-stranded (ds)DNA. Forms a right-handed helical filament on oriC DNA; dsDNA binds to the exterior of the filament while single-stranded (ss)DNA is stabiized in the filament's interior. The ATP-DnaA-oriC complex binds and stabilizes one strand of the AT-rich DNA unwinding element (DUE), permitting loading of DNA polymerase. After initiation quickly degrades to an ADP-DnaA complex that is not apt for DNA replication. Binds acidic phospholipids. The sequence is that of Chromosomal replication initiator protein DnaA from Ruminiclostridium cellulolyticum (strain ATCC 35319 / DSM 5812 / JCM 6584 / H10) (Clostridium cellulolyticum).